The primary structure comprises 567 residues: Wee1-like protein kinase 2 (567 aa).

4 stretches are compositionally biased toward basic and acidic residues: residues 1 to 12 (MDDKDIDKELRQ), 25 to 35 (EGQKKVEESRE), 42 to 51 (EKGEVQDSEA), and 64 to 77 (HELDTSSEKDKESP). The interval 1–117 (MDDKDIDKEL…DSPSTPKTML (117 aa)) is disordered. Phosphoserine is present on S76. The short motif at 173–175 (KRK) is the Nuclear localization signal element. The Protein kinase domain maps to 212–486 (FLEVEKIGVG…AAALARNTVL (275 aa)). ATP-binding positions include 218–226 (IGVGEFGTV) and K241. The Nuclear export signal signature appears at 315-329 (KLKDILLQISLGLNY). D339 (proton acceptor) is an active-site residue. Residues N344 and D380 each coordinate Mg(2+). The stretch at 494–519 (EELQQQLNLEKFKTATLERELREAQQ) forms a coiled coil. A disordered region spans residues 514–567 (LREAQQAQSPQGYTHHGDTGVSGTHTGSRSTKRLVGGKSARSSSFTSGEREPLH).

It belongs to the protein kinase superfamily. Ser/Thr protein kinase family. WEE1 subfamily. In terms of processing, phosphorylated on serine residues. Phosphorylation leads to increase its activity. Expressed in oocytes (at protein level). May also be expressed in testis.

Its subcellular location is the nucleus. It carries out the reaction L-tyrosyl-[protein] + ATP = O-phospho-L-tyrosyl-[protein] + ADP + H(+). In terms of biological role, oocyte-specific protein tyrosine kinase that phosphorylates and inhibits CDK1/CDC2 and acts as a key regulator of meiosis during both prophase I and metaphase II. Required to maintain meiotic arrest in oocytes during the germinal vesicle (GV) stage, a long period of quiescence at dictyate prophase I, by phosphorylating CDK1 at 'Tyr-15', leading to inhibit CDK1 activity and prevent meiotic reentry. Also required for metaphase II exit during egg activation by phosphorylating CDK1 at 'Tyr-15', to ensure exit from meiosis in oocytes and promote pronuclear formation. In Homo sapiens (Human), this protein is Wee1-like protein kinase 2 (WEE2).